The primary structure comprises 249 residues: tRNA pseudouridine synthase A (249 aa).

Catalysis depends on aspartate 53, which acts as the Nucleophile. Residue tyrosine 111 participates in substrate binding.

It belongs to the tRNA pseudouridine synthase TruA family. As to quaternary structure, homodimer.

It catalyses the reaction uridine(38/39/40) in tRNA = pseudouridine(38/39/40) in tRNA. Its function is as follows. Formation of pseudouridine at positions 38, 39 and 40 in the anticodon stem and loop of transfer RNAs. The chain is tRNA pseudouridine synthase A from Streptococcus pyogenes serotype M3 (strain ATCC BAA-595 / MGAS315).